We begin with the raw amino-acid sequence, 516 residues long: Flavonoid 3',5'-hydroxylase (516 aa).

C453 lines the heme pocket.

It belongs to the cytochrome P450 family. Requires heme as cofactor.

The catalysed reaction is a 3',5'-unsubstituted flavanone + 2 reduced [NADPH--hemoprotein reductase] + 2 O2 = a 3',5'-dihydroxyflavanone + 2 oxidized [NADPH--hemoprotein reductase] + 2 H2O + 2 H(+). It functions in the pathway pigment biosynthesis; anthocyanin biosynthesis. Catalyzes the 3'5'-hydroxylation of naringenin and eriodictyol to form 5,7,3,'4',5'-pentahydroxyflavanone and 3',5'-hydroxylation of dihydrokaempferol and dihydroquercetin to form dihydromyricetin. This is Flavonoid 3',5'-hydroxylase (CYP75A4) from Gentiana triflora (Clustered gentian).